The chain runs to 865 residues: Envelope glycoprotein gp160 (865 aa).

The first 20 residues, 1-20, serve as a signal peptide directing secretion; that stretch reads MRYTIITLGIIVIGIGIVLS. The Extracellular segment spans residues 21 to 705; the sequence is KQWITVFYGI…SKWLNILKMG (685 aa). Residue N35 is glycosylated (N-linked (GlcNAc...) asparagine; by host). C42 and C55 are joined by a disulfide. N-linked (GlcNAc...) asparagine; by host glycosylation is found at N68, N117, N150, N165, N195, N198, N210, N252, N255, N266, N276, N282, N294, N306, N316, N373, N414, N451, N488, and N491. 5 disulfides stabilise this stretch: C101–C218, C108–C209, C113–C166, C231–C261, and C241–C253. The V1 stretch occupies residues 113 to 165; sequence CVELNSTRERATTPTTTPKSTGLPCVGPTSGENLQSCNASIIEREMEDEPASN. Residues 166–209 form a V2 region; sequence CTFAMAGYVRDQKKNYYSVVWNDAEIYCKNKTNSTSKECYMIHC. Residues 311–343 are V3; it reads CRRPGNKTVLPVTIMAGLVFHSQKYNMKLRQAW. An intrachain disulfide couples C311 to C344. A disulfide bond links C396 and C471. The interval 403 to 444 is V4; the sequence is CKMDWFLNYLNNKTWDAYHNFCSSKKKGHAPGPCVQRTYVAY. Positions 487 to 494 are V5; the sequence is KNRTNVTL. The fusion peptide stretch occupies residues 537 to 557; sequence VPFVLGFLGFLGAAGTAMGAA. The tract at residues 600–616 is immunosuppression; it reads LNARVTALEKYLEDQAR. N-linked (GlcNAc...) asparagine; by host glycans are attached at residues N645 and N661. The stretch at 650-675 forms a coiled coil; the sequence is EWERQIADLESNITGQLVKAREQEEK. Positions 682-703 are MPER; binding to GalCer; the sequence is KLTSWSDFWSWFDFSKWLNILK. A helical transmembrane segment spans residues 706–726; sequence FLVIVGIIGLRLLYTVYGCIV. Residues 727-865 lie on the Cytoplasmic side of the membrane; it reads RVRQGYVPLS…VRQGLEEILN (139 aa). Residues 732-735 carry the YXXL motif; contains endocytosis signal motif; sequence YVPL. Residues 744–763 form a disordered region; the sequence is VGKGRPDNADEPGEGGDNSR.

In terms of assembly, the mature envelope protein (Env) consists of a homotrimer of non-covalently associated gp120-gp41 heterodimers. The resulting complex protrudes from the virus surface as a spike. Interacts with host CD4 and CCR5. Gp120 also interacts with the C-type lectins CD209/DC-SIGN and CLEC4M/DC-SIGNR (collectively referred to as DC-SIGN(R)). The mature envelope protein (Env) consists of a homotrimer of non-covalently associated gp120-gp41 heterodimers. The resulting complex protrudes from the virus surface as a spike. Specific enzymatic cleavages in vivo yield mature proteins. Envelope glycoproteins are synthesized as an inactive precursor that is heavily N-glycosylated and processed likely by host cell furin in the Golgi to yield the mature SU and TM proteins. The cleavage site between SU and TM requires the minimal sequence [KR]-X-[KR]-R.

The protein localises to the virion membrane. It localises to the host cell membrane. It is found in the host endosome membrane. In terms of biological role, the surface protein gp120 (SU) attaches the virus to the host lymphoid cell by binding to the primary receptor CD4. This interaction induces a structural rearrangement creating a high affinity binding site for a chemokine coreceptor like CCR5. This peculiar 2 stage receptor-interaction strategy allows gp120 to maintain the highly conserved coreceptor-binding site in a cryptic conformation, protected from neutralizing antibodies. These changes are transmitted to the transmembrane protein gp41 and are thought to activate its fusogenic potential by unmasking its fusion peptide. Its function is as follows. Surface protein gp120 (SU) may target the virus to gut-associated lymphoid tissue (GALT) by binding host ITGA4/ITGB7 (alpha-4/beta-7 integrins), a complex that mediates T-cell migration to the GALT. Interaction between gp120 and ITGA4/ITGB7 would allow the virus to enter GALT early in the infection, infecting and killing most of GALT's resting CD4+ T-cells. This T-cell depletion is believed to be the major insult to the host immune system leading to AIDS. Functionally, the surface protein gp120 is a ligand for CD209/DC-SIGN and CLEC4M/DC-SIGNR, which are respectively found on dendritic cells (DCs), and on endothelial cells of liver sinusoids and lymph node sinuses. These interactions allow capture of viral particles at mucosal surfaces by these cells and subsequent transmission to permissive cells. DCs are professional antigen presenting cells, critical for host immunity by inducing specific immune responses against a broad variety of pathogens. They act as sentinels in various tissues where they take up antigen, process it, and present it to T-cells following migration to lymphoid organs. SIV subverts the migration properties of dendritic cells to gain access to CD4+ T-cells in lymph nodes. Virus transmission to permissive T-cells occurs either in trans (without DCs infection, through viral capture and transmission), or in cis (following DCs productive infection, through the usual CD4-gp120 interaction), thereby inducing a robust infection. In trans infection, bound virions remain infectious over days and it is proposed that they are not degraded, but protected in non-lysosomal acidic organelles within the DCs close to the cell membrane thus contributing to the viral infectious potential during DCs' migration from the periphery to the lymphoid tissues. On arrival at lymphoid tissues, intact virions recycle back to DCs' cell surface allowing virus transmission to CD4+ T-cells. Virion capture also seems to lead to MHC-II-restricted viral antigen presentation, and probably to the activation of SIV-specific CD4+ cells. The transmembrane protein gp41 (TM) acts as a class I viral fusion protein. Under the current model, the protein has at least 3 conformational states: pre-fusion native state, pre-hairpin intermediate state, and post-fusion hairpin state. During fusion of viral and target intracellular membranes, the coiled coil regions (heptad repeats) assume a trimer-of-hairpins structure, positioning the fusion peptide in close proximity to the C-terminal region of the ectodomain. The formation of this structure appears to drive apposition and subsequent fusion of viral and target cell membranes. Complete fusion occurs in host cell endosomes. The virus undergoes clathrin-dependent internalization long before endosomal fusion, thus minimizing the surface exposure of conserved viral epitopes during fusion and reducing the efficacy of inhibitors targeting these epitopes. Membranes fusion leads to delivery of the nucleocapsid into the cytoplasm. In terms of biological role, the envelope glycoprotein gp160 precursor down-modulates cell surface CD4 antigen by interacting with it in the endoplasmic reticulum and blocking its transport to the cell surface. Its function is as follows. The gp120-gp41 heterodimer allows rapid transcytosis of the virus through CD4 negative cells such as simple epithelial monolayers of the intestinal, rectal and endocervical epithelial barriers. Both gp120 and gp41 specifically recognize glycosphingolipids galactosyl-ceramide (GalCer) or 3' sulfo-galactosyl-ceramide (GalS) present in the lipid rafts structures of epithelial cells. Binding to these alternative receptors allows the rapid transcytosis of the virus through the epithelial cells. This transcytotic vesicle-mediated transport of virions from the apical side to the basolateral side of the epithelial cells does not involve infection of the cells themselves. In Simian immunodeficiency virus agm.vervet (isolate AGM TYO-1) (SIV-agm.ver), this protein is Envelope glycoprotein gp160 (env).